Reading from the N-terminus, the 594-residue chain is Aspartate--tRNA(Asp/Asn) ligase (594 aa).

Glu-176 provides a ligand contact to L-aspartate. The tract at residues 200 to 203 is aspartate; sequence QIFK. Arg-222 lines the L-aspartate pocket. ATP contacts are provided by residues 222–224 and Gln-231; that span reads RDE. His-450 is an L-aspartate binding site. Glu-484 is a binding site for ATP. Arg-491 is a binding site for L-aspartate. 536–539 contributes to the ATP binding site; it reads GLDR.

It belongs to the class-II aminoacyl-tRNA synthetase family. Type 1 subfamily. As to quaternary structure, homodimer.

Its subcellular location is the cytoplasm. It carries out the reaction tRNA(Asx) + L-aspartate + ATP = L-aspartyl-tRNA(Asx) + AMP + diphosphate. In terms of biological role, aspartyl-tRNA synthetase with relaxed tRNA specificity since it is able to aspartylate not only its cognate tRNA(Asp) but also tRNA(Asn). Reaction proceeds in two steps: L-aspartate is first activated by ATP to form Asp-AMP and then transferred to the acceptor end of tRNA(Asp/Asn). The protein is Aspartate--tRNA(Asp/Asn) ligase of Geobacillus sp. (strain WCH70).